A 632-amino-acid polypeptide reads, in one-letter code: Dihydrolipoyllysine-residue acetyltransferase component of pyruvate dehydrogenase complex, mitochondrial (632 aa).

The transit peptide at 1 to 77 directs the protein to the mitochondrion; the sequence is MWRVCARRVQ…LLGSPSRRSY (77 aa). Lipoyl-binding domains lie at 82–158 and 208–284; these read HQKV…CITV and HMQI…CIIV. Ser-91 is subject to Phosphoserine. An N6-lipoyllysine mark is found at Lys-123 and Lys-249. The Peripheral subunit-binding (PSBD) domain occupies 342-379; it reads FVSPLAKKLAAEKGIDLTQVKGTGPEGRIIKKDIDSFV. Residue Arg-446 participates in CoA binding. Lys-451 bears the N6-acetyllysine mark. Lys-458 carries the post-translational modification N6-succinyllysine. Ser-460 lines the CoA pocket. Lys-532 bears the N6-succinyllysine mark. CoA is bound by residues Ser-551, Asn-552, and Gly-576. Residues His-605 and Asp-609 contribute to the active site.

The protein belongs to the 2-oxoacid dehydrogenase family. Part of the pyruvate dehydrogenase complex (PDHc) that is a multi-enzyme complex composed of multiple copies of three enzymes, pyruvate dehydrogenase (subunits PDH1A and PDHB, E1 component), dihydrolipoamide acetyltransferase (DLAT, E2 component), and dihydrolipoamide dehydrogenase (DLD, E3 component) to which is added an additional protein the E3-binding protein (PDHX, E3BP). In terms of structural architecture, the E2 and E3BP components assemble into a 60meric central core with icosahedral symmetry. The central core is decorated with E1 and E3 proteins. Currently, two alternative models for the E2:E3BP stoichiometry are considered as being either 48:12 (E2(48)-E3BP(12)) or 40:20 (E2(40)-E3BP(20)). Interacts with PDK2 and PDK3. Interacts with SIRT4. Interacts with PDHB. Requires (R)-lipoate as cofactor. In terms of processing, delipoylated at Lys-123 and Lys-249 by SIRT4, delipoylation decreases the PHD complex activity. As to expression, expressed in flagella of epididymal sperm.

The protein localises to the mitochondrion matrix. It catalyses the reaction N(6)-[(R)-dihydrolipoyl]-L-lysyl-[protein] + acetyl-CoA = N(6)-[(R)-S(8)-acetyldihydrolipoyl]-L-lysyl-[protein] + CoA. Functionally, as part of the pyruvate dehydrogenase complex, catalyzes the transfers of an acetyl group to a lipoic acid moiety. The pyruvate dehydrogenase complex, catalyzes the overall conversion of pyruvate to acetyl-CoA and CO(2), and thereby links cytoplasmic glycolysis and the mitochondrial tricarboxylic acid (TCA) cycle. The polypeptide is Dihydrolipoyllysine-residue acetyltransferase component of pyruvate dehydrogenase complex, mitochondrial (Rattus norvegicus (Rat)).